Consider the following 329-residue polypeptide: Ubiquitin carboxyl-terminal hydrolase isozyme L5 (329 aa).

In terms of domain architecture, UCH catalytic spans 7–225 (EWCLMESDPG…IRFNLMAIVS (219 aa)). K47 carries the N6-succinyllysine modification. Residue C88 is the Nucleophile of the active site. An N6-acetyllysine modification is found at K158. Catalysis depends on H164, which acts as the Proton donor. The residue at position 289 (K289) is an N6-succinyllysine. A ULD domain is found at 291 to 319 (NYLPFIMELLKTLAEHQQLIPLVEKAKEK). The tract at residues 313 to 329 (VEKAKEKQNAKKAQETK) is interaction with ADRM1.

The protein belongs to the peptidase C12 family. Component of the 19S (PA700) regulatory complex of the 26S proteasome. Interacts with ADRM1 and NFRKB; in vitro ADRM1 and NFRKB compete for interaction with UCHL5. Component of the INO80 complex; specifically part of a complex module associated with N-terminus of INO80.

It localises to the cytoplasm. Its subcellular location is the nucleus. It catalyses the reaction Thiol-dependent hydrolysis of ester, thioester, amide, peptide and isopeptide bonds formed by the C-terminal Gly of ubiquitin (a 76-residue protein attached to proteins as an intracellular targeting signal).. Its activity is regulated as follows. Activated by ADRM1. Inhibited by interaction with NFRKB. Its function is as follows. Protease that specifically cleaves 'Lys-48'-linked polyubiquitin chains. Deubiquitinating enzyme associated with the 19S regulatory subunit of the 26S proteasome. Putative regulatory component of the INO80 complex; however is inactive in the INO80 complex and is activated by a transient interaction of the INO80 complex with the proteasome via ADRM1. This Homo sapiens (Human) protein is Ubiquitin carboxyl-terminal hydrolase isozyme L5 (UCHL5).